Consider the following 275-residue polypeptide: Diaminopimelate epimerase (275 aa).

3 residues coordinate substrate: Asn-12, Gln-45, and Asn-65. Cys-74 functions as the Proton donor in the catalytic mechanism. Residues Gly-75–Asn-76, Asn-158, Asn-191, and Glu-209–Arg-210 each bind substrate. Residue Cys-218 is the Proton acceptor of the active site. Gly-219–Thr-220 contacts substrate.

This sequence belongs to the diaminopimelate epimerase family. Homodimer.

It is found in the cytoplasm. It carries out the reaction (2S,6S)-2,6-diaminopimelate = meso-2,6-diaminopimelate. It functions in the pathway amino-acid biosynthesis; L-lysine biosynthesis via DAP pathway; DL-2,6-diaminopimelate from LL-2,6-diaminopimelate: step 1/1. Catalyzes the stereoinversion of LL-2,6-diaminopimelate (L,L-DAP) to meso-diaminopimelate (meso-DAP), a precursor of L-lysine and an essential component of the bacterial peptidoglycan. In Shewanella frigidimarina (strain NCIMB 400), this protein is Diaminopimelate epimerase.